The chain runs to 282 residues: HTH-type transcriptional activator RhaR (282 aa).

Positions 179 to 277 (DKLITRLAAS…GMTPSQWRHL (99 aa)) constitute an HTH araC/xylS-type domain. DNA-binding regions (H-T-H motif) lie at residues 196-217 (DKFCDEASCSERVLRQQFRQQT) and 244-267 (ISDISTECGFEDSNYFSVVFTRET).

As to quaternary structure, binds DNA as a dimer.

Its subcellular location is the cytoplasm. Activates expression of the rhaSR operon in response to L-rhamnose. The sequence is that of HTH-type transcriptional activator RhaR from Shigella flexneri serotype 5b (strain 8401).